The sequence spans 318 residues: NADH-ubiquinone oxidoreductase chain 1 (318 aa).

Transmembrane regions (helical) follow at residues 2–22, 68–88, 100–120, 146–166, 171–191, 222–242, 253–273, and 294–314; these read FMIN…FLTL, ITMF…MWTP, LGVL…LWSG, LAII…PALI, HMWL…STLA, LFFL…TILF, ELYT…FLWV, and LPLT…TAGI.

This sequence belongs to the complex I subunit 1 family.

The protein resides in the mitochondrion inner membrane. The catalysed reaction is a ubiquinone + NADH + 5 H(+)(in) = a ubiquinol + NAD(+) + 4 H(+)(out). Core subunit of the mitochondrial membrane respiratory chain NADH dehydrogenase (Complex I) that is believed to belong to the minimal assembly required for catalysis. Complex I functions in the transfer of electrons from NADH to the respiratory chain. The immediate electron acceptor for the enzyme is believed to be ubiquinone. The sequence is that of NADH-ubiquinone oxidoreductase chain 1 (MT-ND1) from Coelops frithii (East Asian tailless leaf-nosed bat).